The chain runs to 282 residues: Formamidopyrimidine-DNA glycosylase (282 aa).

Catalysis depends on Pro-2, which acts as the Schiff-base intermediate with DNA. Glu-3 serves as the catalytic Proton donor. Residue Lys-61 is the Proton donor; for beta-elimination activity of the active site. DNA is bound by residues His-93, Arg-112, and Lys-158. Residues 244-278 (DAYGREGEGCRRCGAVMHREKFMNRSSFYCPRCQP) form an FPG-type zinc finger. Residue Arg-268 is the Proton donor; for delta-elimination activity of the active site.

Belongs to the FPG family. Monomer. Requires Zn(2+) as cofactor.

The catalysed reaction is Hydrolysis of DNA containing ring-opened 7-methylguanine residues, releasing 2,6-diamino-4-hydroxy-5-(N-methyl)formamidopyrimidine.. It catalyses the reaction 2'-deoxyribonucleotide-(2'-deoxyribose 5'-phosphate)-2'-deoxyribonucleotide-DNA = a 3'-end 2'-deoxyribonucleotide-(2,3-dehydro-2,3-deoxyribose 5'-phosphate)-DNA + a 5'-end 5'-phospho-2'-deoxyribonucleoside-DNA + H(+). In terms of biological role, involved in base excision repair of DNA damaged by oxidation or by mutagenic agents. Acts as a DNA glycosylase that recognizes and removes damaged bases. Has a preference for oxidized purines, such as 7,8-dihydro-8-oxoguanine (8-oxoG). Has AP (apurinic/apyrimidinic) lyase activity and introduces nicks in the DNA strand. Cleaves the DNA backbone by beta-delta elimination to generate a single-strand break at the site of the removed base with both 3'- and 5'-phosphates. This is Formamidopyrimidine-DNA glycosylase from Mycobacterium leprae (strain Br4923).